Reading from the N-terminus, the 203-residue chain is MSRYTGPSWKQSRRLGLSLTGTGKELARRNYVPGQHGPNNRSKLSEYGLQLAEKQKLRFSYGLGEKQFRNLFVQATKIKEGTLGFNFMVLLERRLDNVVYRLGLATTRRQARQFVNHGHILVDGKRVDIPSYRVDPGQVISVREKSMKVPAILEAVEATLGRPAFVSFDAEKLEGALTRLPERDEINPEINEALVVEFYNKML.

The region spanning 93-156 (RRLDNVVYRL…MKVPAILEAV (64 aa)) is the S4 RNA-binding domain.

This sequence belongs to the universal ribosomal protein uS4 family. Part of the 30S ribosomal subunit. Contacts protein S5. The interaction surface between S4 and S5 is involved in control of translational fidelity.

Functionally, one of the primary rRNA binding proteins, it binds directly to 16S rRNA where it nucleates assembly of the body of the 30S subunit. Its function is as follows. With S5 and S12 plays an important role in translational accuracy. In Streptococcus pyogenes serotype M4 (strain MGAS10750), this protein is Small ribosomal subunit protein uS4.